We begin with the raw amino-acid sequence, 336 residues long: NADH-quinone oxidoreductase subunit H (336 aa).

8 helical membrane passes run 9 to 29 (LVWI…LTYA), 77 to 97 (FLFA…VIPF), 116 to 136 (LGVM…IIAG), 156 to 176 (ISYE…TGSL), 188 to 208 (LPYW…VSIL), 236 to 256 (IPFA…SSIM), 275 to 295 (IVPG…CFLI), and 315 to 335 (VFLP…AFNI).

This sequence belongs to the complex I subunit 1 family. As to quaternary structure, NDH-1 is composed of 14 different subunits. Subunits NuoA, H, J, K, L, M, N constitute the membrane sector of the complex.

The protein localises to the cell inner membrane. It catalyses the reaction a quinone + NADH + 5 H(+)(in) = a quinol + NAD(+) + 4 H(+)(out). In terms of biological role, NDH-1 shuttles electrons from NADH, via FMN and iron-sulfur (Fe-S) centers, to quinones in the respiratory chain. The immediate electron acceptor for the enzyme in this species is believed to be ubiquinone. Couples the redox reaction to proton translocation (for every two electrons transferred, four hydrogen ions are translocated across the cytoplasmic membrane), and thus conserves the redox energy in a proton gradient. This subunit may bind ubiquinone. In Neorickettsia sennetsu (strain ATCC VR-367 / Miyayama) (Ehrlichia sennetsu), this protein is NADH-quinone oxidoreductase subunit H.